Reading from the N-terminus, the 275-residue chain is ATP synthase subunit delta (275 aa).

Belongs to the ATPase delta chain family. F-type ATPases have 2 components, F(1) - the catalytic core - and F(0) - the membrane proton channel. F(1) has five subunits: alpha(3), beta(3), gamma(1), delta(1), epsilon(1). F(0) has three main subunits: a(1), b(2) and c(10-14). The alpha and beta chains form an alternating ring which encloses part of the gamma chain. F(1) is attached to F(0) by a central stalk formed by the gamma and epsilon chains, while a peripheral stalk is formed by the delta and b chains.

It is found in the cell membrane. F(1)F(0) ATP synthase produces ATP from ADP in the presence of a proton or sodium gradient. F-type ATPases consist of two structural domains, F(1) containing the extramembraneous catalytic core and F(0) containing the membrane proton channel, linked together by a central stalk and a peripheral stalk. During catalysis, ATP synthesis in the catalytic domain of F(1) is coupled via a rotary mechanism of the central stalk subunits to proton translocation. Functionally, this protein is part of the stalk that links CF(0) to CF(1). It either transmits conformational changes from CF(0) to CF(1) or is implicated in proton conduction. The polypeptide is ATP synthase subunit delta (Pseudarthrobacter chlorophenolicus (strain ATCC 700700 / DSM 12829 / CIP 107037 / JCM 12360 / KCTC 9906 / NCIMB 13794 / A6) (Arthrobacter chlorophenolicus)).